A 431-amino-acid chain; its full sequence is Histidinol dehydrogenase (431 aa).

Positions 127, 185, and 208 each coordinate NAD(+). The substrate site is built by Ser234, Gln256, and His259. The Zn(2+) site is built by Gln256 and His259. Active-site proton acceptor residues include Glu323 and His324. 4 residues coordinate substrate: His324, Asp357, Glu411, and His416. Asp357 contacts Zn(2+). Position 416 (His416) interacts with Zn(2+).

This sequence belongs to the histidinol dehydrogenase family. Zn(2+) serves as cofactor.

The catalysed reaction is L-histidinol + 2 NAD(+) + H2O = L-histidine + 2 NADH + 3 H(+). It functions in the pathway amino-acid biosynthesis; L-histidine biosynthesis; L-histidine from 5-phospho-alpha-D-ribose 1-diphosphate: step 9/9. Functionally, catalyzes the sequential NAD-dependent oxidations of L-histidinol to L-histidinaldehyde and then to L-histidine. The protein is Histidinol dehydrogenase of Vibrio cholerae serotype O1 (strain ATCC 39315 / El Tor Inaba N16961).